A 230-amino-acid polypeptide reads, in one-letter code: MARHLPATAFRKRRSALSHAQRQTWERLWPEIGISAVSQTRSAERLDTGAWFGRSTLVVLEVGCGSGTATLAMAQHEPDIDVIAVEVYRRGLAQLLCAIDRDQVHNIRMIHGNALYVLQYLIAPRSLTGVRVFFPDPWPKVRHHKRRFLQPATVELIADRLLPGGVLHTATDHPDYAKQIAKFGDGEPLLSRADGRTQLPISTVRPTTKYETKAQHAGNVVTELIWKKRS.

Residues glutamate 61, glutamate 86, asparagine 113, and aspartate 136 each coordinate S-adenosyl-L-methionine. Aspartate 136 is a catalytic residue. Substrate is bound by residues lysine 140, aspartate 172, and 208-211 (TKYE).

This sequence belongs to the class I-like SAM-binding methyltransferase superfamily. TrmB family.

The enzyme catalyses guanosine(46) in tRNA + S-adenosyl-L-methionine = N(7)-methylguanosine(46) in tRNA + S-adenosyl-L-homocysteine. It participates in tRNA modification; N(7)-methylguanine-tRNA biosynthesis. Its function is as follows. Catalyzes the formation of N(7)-methylguanine at position 46 (m7G46) in tRNA. The protein is tRNA (guanine-N(7)-)-methyltransferase of Mycobacterium leprae (strain Br4923).